The primary structure comprises 285 residues: Golgi to ER traffic protein 2 (285 aa).

Positions 1–10 (MSELTEAEKR) are enriched in basic and acidic residues. Disordered stretches follow at residues 1–72 (MSEL…KEDS) and 87–106 (MQGQGTGKSTPQDSSTPDLL). Serine 2 is modified (N-acetylserine). The Cytoplasmic portion of the chain corresponds to 2-148 (SELTEAEKRR…LDYHDYLLNR (147 aa)). Positions 11-20 (RLLRERRQKK) are enriched in basic residues. Positions 24-42 (GGASSRLNKITGQASSHLN) are enriched in polar residues. A Phosphoserine modification is found at serine 45. The span at 49-60 (APSAAKTTPPAS) shows a compositional bias: low complexity. The span at 93–104 (GKSTPQDSSTPD) shows a compositional bias: polar residues. The helical transmembrane segment at 149 to 169 (LKAWTILVKWVFFLLPYLYLI) threads the bilayer. The Lumenal segment spans residues 170–196 (TRPNSSVWPAYAFTQSAWFAPLRNPSN). Asparagine 173 and asparagine 196 each carry an N-linked (GlcNAc...) asparagine glycan. Residues 197 to 216 (FTRIFATFEFLSISIYYQLL) traverse the membrane as a helical segment. Residues 217–263 (KNVEHKSKIKNLQDTNKLVKLVSLVPEGVIPVANLKGKLITLLQYWD) are Cytoplasmic-facing. A helical transmembrane segment spans residues 264-284 (LLSMLITDISFVLIVLGLLTY). Position 285 (leucine 285) is a topological domain, lumenal.

This sequence belongs to the GET2 family. Component of the Golgi to ER traffic (GET) complex, which is composed of GET1, GET2 and GET3. Within the complex, GET1 and GET2 form a heterotetramer which is stabilized by phosphatidylinositol binding and which binds to the GET3 homodimer.

The protein resides in the endoplasmic reticulum membrane. It localises to the golgi apparatus membrane. Functionally, required for the post-translational delivery of tail-anchored (TA) proteins to the endoplasmic reticulum. Together with GET1, acts as a membrane receptor for soluble GET3, which recognizes and selectively binds the transmembrane domain of TA proteins in the cytosol. The GET complex cooperates with the HDEL receptor ERD2 to mediate the ATP-dependent retrieval of resident ER proteins that contain a C-terminal H-D-E-L retention signal from the Golgi to the ER. Involved in DNA replication and DNA damage response and also in cell wall function. In Saccharomyces cerevisiae (strain RM11-1a) (Baker's yeast), this protein is Golgi to ER traffic protein 2.